We begin with the raw amino-acid sequence, 190 residues long: Tegument antigen (190 aa).

EF-hand domains are found at residues 8-43 (SQME…YRLD) and 51-77 (IARF…KVSE). Ca(2+)-binding residues include aspartate 55, aspartate 57, aspartate 59, lysine 61, and glutamate 66.

Adult and schistosomula tegument.

In Schistosoma mansoni (Blood fluke), this protein is Tegument antigen.